The primary structure comprises 318 residues: Aspartate carbamoyltransferase catalytic subunit (318 aa).

Residues R59 and T60 each contribute to the carbamoyl phosphate site. K87 contacts L-aspartate. Residues R109, H137, and Q140 each coordinate carbamoyl phosphate. Residues R170 and R224 each contribute to the L-aspartate site. Carbamoyl phosphate-binding residues include G265 and P266.

This sequence belongs to the aspartate/ornithine carbamoyltransferase superfamily. ATCase family. As to quaternary structure, heterododecamer (2C3:3R2) of six catalytic PyrB chains organized as two trimers (C3), and six regulatory PyrI chains organized as three dimers (R2).

The enzyme catalyses carbamoyl phosphate + L-aspartate = N-carbamoyl-L-aspartate + phosphate + H(+). It participates in pyrimidine metabolism; UMP biosynthesis via de novo pathway; (S)-dihydroorotate from bicarbonate: step 2/3. Its function is as follows. Catalyzes the condensation of carbamoyl phosphate and aspartate to form carbamoyl aspartate and inorganic phosphate, the committed step in the de novo pyrimidine nucleotide biosynthesis pathway. The sequence is that of Aspartate carbamoyltransferase catalytic subunit from Allorhizobium ampelinum (strain ATCC BAA-846 / DSM 112012 / S4) (Agrobacterium vitis (strain S4)).